A 262-amino-acid polypeptide reads, in one-letter code: tRNA pseudouridine synthase A (262 aa).

Residue aspartate 54 is the Nucleophile of the active site. Tyrosine 113 is a substrate binding site.

Belongs to the tRNA pseudouridine synthase TruA family. As to quaternary structure, homodimer.

The catalysed reaction is uridine(38/39/40) in tRNA = pseudouridine(38/39/40) in tRNA. Functionally, formation of pseudouridine at positions 38, 39 and 40 in the anticodon stem and loop of transfer RNAs. The polypeptide is tRNA pseudouridine synthase A (Lactobacillus delbrueckii subsp. bulgaricus (strain ATCC BAA-365 / Lb-18)).